The following is a 143-amino-acid chain: Na(+)/H(+) antiporter subunit B (143 aa).

Transmembrane regions (helical) follow at residues 9 to 31, 36 to 58, 71 to 93, and 117 to 139; these read LILQ…YLFL, APGG…LLAY, FIYV…FVFG, and ATIF…IQTI.

This sequence belongs to the CPA3 antiporters (TC 2.A.63) subunit B family. In terms of assembly, forms a heterooligomeric complex that consists of seven subunits: MrpA, MrpB, MrpC, MrpD, MrpE, MrpF and MrpG.

The protein localises to the cell membrane. Its function is as follows. Mrp complex is a Na(+)/H(+) antiporter that is considered to be the major Na(+) excretion system in B.subtilis. Has a major role in Na(+) resistance and a minor role in Na(+)- and K(+)-dependent pH homeostasis as compared to TetB. MrpA may be the actual Na(+)/H(+) antiporter, although the six other Mrp proteins are all required for Na(+)/H(+) antiport activity and Na(+) resistance. MrpA is required for initiation of sporulation when external Na(+) concentration increases. Also transports Li(+) but not K(+), Ca(2+) or Mg(2+). The sequence is that of Na(+)/H(+) antiporter subunit B (mrpB) from Bacillus subtilis (strain 168).